A 285-amino-acid chain; its full sequence is ATP synthase gamma chain (285 aa).

It belongs to the ATPase gamma chain family. In terms of assembly, F-type ATPases have 2 components, CF(1) - the catalytic core - and CF(0) - the membrane proton channel. CF(1) has five subunits: alpha(3), beta(3), gamma(1), delta(1), epsilon(1). CF(0) has three main subunits: a, b and c.

It localises to the cell membrane. In terms of biological role, produces ATP from ADP in the presence of a proton gradient across the membrane. The gamma chain is believed to be important in regulating ATPase activity and the flow of protons through the CF(0) complex. This chain is ATP synthase gamma chain, found in Dehalococcoides mccartyi (strain ATCC BAA-2266 / KCTC 15142 / 195) (Dehalococcoides ethenogenes (strain 195)).